Reading from the N-terminus, the 623-residue chain is Stretch-activated cation channel MID1 (623 aa).

The Extracellular portion of the chain corresponds to 1 to 57; sequence MPAREVYLKRPATRRQLEGICTRYDGQQRITQLDCEEGCSKRTQPPQRLNPRYKSPD. A helical transmembrane segment spans residues 58-78; it reads LIHISFIIVLLCILSMTSSVV. Residues 79 to 623 are Cytoplasmic-facing; it reads AQTTTGSSSS…DRWGNRWCNG (545 aa). A compositionally biased stretch (low complexity) spans 524–536; the sequence is TSTSSGTFPTPST. The interval 524–544 is disordered; it reads TSTSSGTFPTPSTVLRTPSSP. A required for targeting to the cell membrane region spans residues 600–623; the sequence is SYGDGSAAQGVAAQDRWGNRWCNG.

Forms an oligomer by disulfide bonds. Interacts with CCH1 to form a Ca(2+) influx channel. Interacts (via C-terminus) with CCP1/cytochrome c peroxidase; the interaction may contribute to cellular detoxification of radicals.

The protein resides in the cell membrane. In terms of biological role, calcium-permeable, cation-selective stretch-activated channel (SAC) that functions together with CCH1 to mediate calcium entry into cells. May additionally play a role in cellular detoxification of radicals. The sequence is that of Stretch-activated cation channel MID1 from Cryptococcus neoformans var. grubii serotype A (strain H99 / ATCC 208821 / CBS 10515 / FGSC 9487) (Filobasidiella neoformans var. grubii).